The following is a 40-amino-acid chain: Large ribosomal subunit protein bL36 (40 aa).

It belongs to the bacterial ribosomal protein bL36 family.

The chain is Large ribosomal subunit protein bL36 from Corynebacterium aurimucosum (strain ATCC 700975 / DSM 44827 / CIP 107346 / CN-1) (Corynebacterium nigricans).